A 100-amino-acid chain; its full sequence is Urease subunit gamma (100 aa).

Belongs to the urease gamma subunit family. Heterotrimer of UreA (gamma), UreB (beta) and UreC (alpha) subunits. Three heterotrimers associate to form the active enzyme.

The protein resides in the cytoplasm. The enzyme catalyses urea + 2 H2O + H(+) = hydrogencarbonate + 2 NH4(+). It participates in nitrogen metabolism; urea degradation; CO(2) and NH(3) from urea (urease route): step 1/1. In Variovorax paradoxus (strain S110), this protein is Urease subunit gamma.